Here is a 329-residue protein sequence, read N- to C-terminus: Beta-ketoacyl-[acyl-carrier-protein] synthase III (329 aa).

Active-site residues include Cys-123 and His-256. The tract at residues Gln-257–Arg-261 is ACP-binding. Asn-286 is a catalytic residue.

The protein belongs to the thiolase-like superfamily. FabH family. In terms of assembly, homodimer.

It is found in the cytoplasm. The catalysed reaction is malonyl-[ACP] + acetyl-CoA + H(+) = 3-oxobutanoyl-[ACP] + CO2 + CoA. Its pathway is lipid metabolism; fatty acid biosynthesis. In terms of biological role, catalyzes the condensation reaction of fatty acid synthesis by the addition to an acyl acceptor of two carbons from malonyl-ACP. Catalyzes the first condensation reaction which initiates fatty acid synthesis and may therefore play a role in governing the total rate of fatty acid production. Possesses both acetoacetyl-ACP synthase and acetyl transacylase activities. Its substrate specificity determines the biosynthesis of branched-chain and/or straight-chain of fatty acids. This Burkholderia vietnamiensis (strain G4 / LMG 22486) (Burkholderia cepacia (strain R1808)) protein is Beta-ketoacyl-[acyl-carrier-protein] synthase III.